The primary structure comprises 361 residues: MNSSLATYWRALASGTRRSLPDRSLLSLLVPFSLLYALIQRLRAVLYRVRLLKSRRLPRPVISVGNLTVGGTGKTPVTAHIARWLLAEGYRVAVLSRGYGGSLEGHTAVVSDGRTVMMEAEQCGDEPFLLSSTIPGLMVVMGSDRFSAGMLAMEQLAPDVFLLDDGYQHLRLTRDLNILLLDHALPFGNGWTLPAGVLREPTSAAGRADLVIRTRCPRIAPCPSPLPGIPSCTARHSLGNVIPLGNGAAFPMESLRGRRVLAFAGIADPYGFFEELREQGLNLVAELAMPDHVAYDDNRIAEIGRRLHGSGAEFAVTTEKDGVKLLGLQRECAEKILLARLELIIADPAPLTDALRNLLQK.

Residue 68-75 (TVGGTGKT) coordinates ATP.

Belongs to the LpxK family.

It catalyses the reaction a lipid A disaccharide + ATP = a lipid IVA + ADP + H(+). The protein operates within glycolipid biosynthesis; lipid IV(A) biosynthesis; lipid IV(A) from (3R)-3-hydroxytetradecanoyl-[acyl-carrier-protein] and UDP-N-acetyl-alpha-D-glucosamine: step 6/6. Functionally, transfers the gamma-phosphate of ATP to the 4'-position of a tetraacyldisaccharide 1-phosphate intermediate (termed DS-1-P) to form tetraacyldisaccharide 1,4'-bis-phosphate (lipid IVA). This is Tetraacyldisaccharide 4'-kinase from Pelobacter propionicus (strain DSM 2379 / NBRC 103807 / OttBd1).